The chain runs to 451 residues: 3-carboxy-cis,cis-muconate cycloisomerase (451 aa).

This sequence belongs to the class-II fumarase/aspartase family.

The enzyme catalyses 2-(carboxymethyl)-5-oxo-2,5-dihydro-2-furoate = 3-carboxy-cis,cis-muconate + H(+). Catalyzes an anti cycloisomerization. This Bradyrhizobium diazoefficiens (strain JCM 10833 / BCRC 13528 / IAM 13628 / NBRC 14792 / USDA 110) protein is 3-carboxy-cis,cis-muconate cycloisomerase (pcaB).